We begin with the raw amino-acid sequence, 161 residues long: SsrA-binding protein (161 aa).

Belongs to the SmpB family.

It is found in the cytoplasm. Functionally, required for rescue of stalled ribosomes mediated by trans-translation. Binds to transfer-messenger RNA (tmRNA), required for stable association of tmRNA with ribosomes. tmRNA and SmpB together mimic tRNA shape, replacing the anticodon stem-loop with SmpB. tmRNA is encoded by the ssrA gene; the 2 termini fold to resemble tRNA(Ala) and it encodes a 'tag peptide', a short internal open reading frame. During trans-translation Ala-aminoacylated tmRNA acts like a tRNA, entering the A-site of stalled ribosomes, displacing the stalled mRNA. The ribosome then switches to translate the ORF on the tmRNA; the nascent peptide is terminated with the 'tag peptide' encoded by the tmRNA and targeted for degradation. The ribosome is freed to recommence translation, which seems to be the essential function of trans-translation. This chain is SsrA-binding protein, found in Haemophilus influenzae (strain 86-028NP).